Consider the following 163-residue polypeptide: MPRKVAVYPGSFDPITYGHLDIIDRGLRIFDEIIVAVARNSAKNSLFSIDERVDMIQRVLADNVRARVDTFDGLLVDYVLSQNATVIIRGLRAISDFEYEFQIAQMNRSISQDVETLFMMTSVPFGYLSSSIVKEVSSLNGPIDGLVPPLVREALKDKFSKPR.

S11 lines the substrate pocket. Residues 11–12 (SF) and H19 contribute to the ATP site. Residues K43, L75, and R89 each coordinate substrate. Residues 90 to 92 (GLR), E100, and 125 to 131 (FGYLSSS) contribute to the ATP site.

This sequence belongs to the bacterial CoaD family. As to quaternary structure, homohexamer. Mg(2+) serves as cofactor.

Its subcellular location is the cytoplasm. It carries out the reaction (R)-4'-phosphopantetheine + ATP + H(+) = 3'-dephospho-CoA + diphosphate. Its pathway is cofactor biosynthesis; coenzyme A biosynthesis; CoA from (R)-pantothenate: step 4/5. Reversibly transfers an adenylyl group from ATP to 4'-phosphopantetheine, yielding dephospho-CoA (dPCoA) and pyrophosphate. The protein is Phosphopantetheine adenylyltransferase of Geobacter metallireducens (strain ATCC 53774 / DSM 7210 / GS-15).